A 237-amino-acid polypeptide reads, in one-letter code: Ribose-5-phosphate isomerase A (237 aa).

Residues 33-36 (TGST), 90-93 (DGAD), and 103-106 (KGGG) each bind substrate. The active-site Proton acceptor is Glu112. Lys130 lines the substrate pocket.

The protein belongs to the ribose 5-phosphate isomerase family. In terms of assembly, homodimer.

It catalyses the reaction aldehydo-D-ribose 5-phosphate = D-ribulose 5-phosphate. It functions in the pathway carbohydrate degradation; pentose phosphate pathway; D-ribose 5-phosphate from D-ribulose 5-phosphate (non-oxidative stage): step 1/1. In terms of biological role, catalyzes the reversible conversion of ribose-5-phosphate to ribulose 5-phosphate. In Gloeothece citriformis (strain PCC 7424) (Cyanothece sp. (strain PCC 7424)), this protein is Ribose-5-phosphate isomerase A.